The following is an 877-amino-acid chain: Leucine--tRNA ligase (877 aa).

The 'HIGH' region signature appears at 43–53 (PYPSGRIHMGH). The 'KMSKS' region signature appears at 628-632 (KMSKS). ATP is bound at residue Lys-631.

Belongs to the class-I aminoacyl-tRNA synthetase family.

Its subcellular location is the cytoplasm. The catalysed reaction is tRNA(Leu) + L-leucine + ATP = L-leucyl-tRNA(Leu) + AMP + diphosphate. This is Leucine--tRNA ligase from Brucella canis (strain ATCC 23365 / NCTC 10854 / RM-666).